The sequence spans 345 residues: Hydroxymethylglutaryl-CoA synthase (345 aa).

D28 is a binding site for (3S)-3-hydroxy-3-methylglutaryl-CoA. Catalysis depends on E80, which acts as the Proton donor/acceptor. 2 residues coordinate (3S)-3-hydroxy-3-methylglutaryl-CoA: C112 and T153. Residue C112 is the Acyl-thioester intermediate of the active site. R199 contributes to the CoA binding site. Residues T201 and H234 each contribute to the (3S)-3-hydroxy-3-methylglutaryl-CoA site. Catalysis depends on H234, which acts as the Proton donor/acceptor. K239 contributes to the CoA binding site. Residues R243, N266, and S296 each contribute to the (3S)-3-hydroxy-3-methylglutaryl-CoA site.

It belongs to the thiolase-like superfamily. Archaeal HMG-CoA synthase family. In terms of assembly, interacts with acetoacetyl-CoA thiolase that catalyzes the precedent step in the pathway and with a DUF35 protein. The acetoacetyl-CoA thiolase/HMG-CoA synthase complex channels the intermediate via a fused CoA-binding site, which allows for efficient coupling of the endergonic thiolase reaction with the exergonic HMGCS reaction.

The enzyme catalyses acetoacetyl-CoA + acetyl-CoA + H2O = (3S)-3-hydroxy-3-methylglutaryl-CoA + CoA + H(+). Its pathway is metabolic intermediate biosynthesis; (R)-mevalonate biosynthesis; (R)-mevalonate from acetyl-CoA: step 2/3. Catalyzes the condensation of acetyl-CoA with acetoacetyl-CoA to form 3-hydroxy-3-methylglutaryl-CoA (HMG-CoA). Functions in the mevalonate (MVA) pathway leading to isopentenyl diphosphate (IPP), a key precursor for the biosynthesis of isoprenoid compounds that are building blocks of archaeal membrane lipids. The protein is Hydroxymethylglutaryl-CoA synthase of Methanocaldococcus jannaschii (strain ATCC 43067 / DSM 2661 / JAL-1 / JCM 10045 / NBRC 100440) (Methanococcus jannaschii).